The sequence spans 410 residues: Tyrosine--tRNA ligase (410 aa).

Tyrosine 36 contributes to the L-tyrosine binding site. Residues alanine 41–histidine 50 carry the 'HIGH' region motif. The L-tyrosine site is built by tyrosine 169 and glutamine 173. A 'KMSKS' region motif is present at residues lysine 229–threonine 233. Lysine 232 contributes to the ATP binding site. One can recognise an S4 RNA-binding domain in the interval isoleucine 343 to alanine 409.

The protein belongs to the class-I aminoacyl-tRNA synthetase family. TyrS type 1 subfamily. In terms of assembly, homodimer.

It is found in the cytoplasm. It carries out the reaction tRNA(Tyr) + L-tyrosine + ATP = L-tyrosyl-tRNA(Tyr) + AMP + diphosphate + H(+). Functionally, catalyzes the attachment of tyrosine to tRNA(Tyr) in a two-step reaction: tyrosine is first activated by ATP to form Tyr-AMP and then transferred to the acceptor end of tRNA(Tyr). The chain is Tyrosine--tRNA ligase from Lachnoclostridium phytofermentans (strain ATCC 700394 / DSM 18823 / ISDg) (Clostridium phytofermentans).